A 280-amino-acid chain; its full sequence is MYALLEAIEARARANRARVAMGIRDPNHKTLESAWKAQELGYAQVVLVGSKKEIDKIGTGLEVIDTEDPEKVLSDLLVSRKVDAVIRGTAKASGTLSSLKKALGMKRICRLALLLTADGTPFFLAPVGIDEGNTISDKLRMITLGAEHIRRLGVEPAVGVLSGGRMGDIGRDRRVDRTLADGEFITGRALELGINTKHYTILIEDAVKESNFIIAPDGISGNLIFRTVAFLGGGDGLGAPVLMDDYVFVDTSRVGGHFTKAIMLASALSHLNKERKKVIH.

It belongs to the MtxX family. May be part of a complex composed of 3 subunits; MtxA, MtxH and MtxX.

The chain is Putative methyltransferase mtx subunit X (mtxX) from Methanosarcina mazei (strain ATCC BAA-159 / DSM 3647 / Goe1 / Go1 / JCM 11833 / OCM 88) (Methanosarcina frisia).